A 459-amino-acid polypeptide reads, in one-letter code: Exodeoxyribonuclease 7 large subunit (459 aa).

Belongs to the XseA family. As to quaternary structure, heterooligomer composed of large and small subunits.

The protein resides in the cytoplasm. The catalysed reaction is Exonucleolytic cleavage in either 5'- to 3'- or 3'- to 5'-direction to yield nucleoside 5'-phosphates.. Functionally, bidirectionally degrades single-stranded DNA into large acid-insoluble oligonucleotides, which are then degraded further into small acid-soluble oligonucleotides. The chain is Exodeoxyribonuclease 7 large subunit from Yersinia pseudotuberculosis serotype O:3 (strain YPIII).